Here is a 26-residue protein sequence, read N- to C-terminus: Peroxidase 1 (26 aa).

A Ca(2+)-binding site is contributed by aspartate 15.

It belongs to the peroxidase family. Classical plant (class III) peroxidase subfamily. The cofactor is heme b. Ca(2+) serves as cofactor.

The protein localises to the secreted. It catalyses the reaction 2 a phenolic donor + H2O2 = 2 a phenolic radical donor + 2 H2O. Removal of H(2)O(2), oxidation of toxic reductants, biosynthesis and degradation of lignin, suberization, auxin catabolism, response to environmental stresses such as wounding, pathogen attack and oxidative stress. These functions might be dependent on each isozyme/isoform in each plant tissue. This Vitis vinifera (Grape) protein is Peroxidase 1.